The chain runs to 461 residues: Argininosuccinate lyase (461 aa).

This sequence belongs to the lyase 1 family. Argininosuccinate lyase subfamily.

It localises to the cytoplasm. It catalyses the reaction 2-(N(omega)-L-arginino)succinate = fumarate + L-arginine. Its pathway is amino-acid biosynthesis; L-arginine biosynthesis; L-arginine from L-ornithine and carbamoyl phosphate: step 3/3. The protein is Argininosuccinate lyase of Symbiobacterium thermophilum (strain DSM 24528 / JCM 14929 / IAM 14863 / T).